Here is a 281-residue protein sequence, read N- to C-terminus: Survival motor neuron protein 1 (281 aa).

Disordered stretches follow at residues 1 to 20 and 42 to 77; these read MANGAEDVVFCRGTGQSDDS and ALKGEDGATPQENDNPGKKRKNNKKNKSRKRCNAAP. Residue Thr-14 is modified to Phosphothreonine. Phosphoserine occurs at positions 17 and 20. Residues 59-73 show a composition bias toward basic residues; that stretch reads KKRKNNKKNKSRKRC. The Tudor domain occupies 80–140; that stretch reads EWQVGDSCYA…LTEPPDMDED (61 aa). Residues 145–159 show a composition bias toward basic and acidic residues; it reads ANVKETESSTEESDR. The segment at 145-242 is disordered; it reads ANVKETESST…PMSPDFGEDD (98 aa). Composition is skewed to pro residues over residues 179 to 197 and 212 to 235; these read MGPPSWFPSFPPGPPPPPP and PSFPGWPPMIPLGPPMIPPPPPMS. Residues 225–252 are P2 (binding site for SNRPB); that stretch reads PPMIPPPPPMSPDFGEDDEALGSMLISW. The tract at residues 264–279 is required for interaction with SYNCRIP; the sequence is GLRQGRKEAAASKKSH.

The protein belongs to the SMN family. Homodimer. Component of an import snRNP complex composed of kpnb1, rnut1, smn1 and znf259. Part of the core SMN complex that contains smn1, gemin2/sip1, ddx20/gemin3, gemin4, gemin5, gemin6, gemin7, gemin8 and strap/unrip. Interacts with ddx20, fbl, nola1, rnut1, syncrip and with several spliceosomal snRNP core Sm proteins, including snrpb, snrpd1, snrpd2, snrpd3, snrpe and ilf3. Interacts with elavl4.

Its subcellular location is the nucleus. It localises to the gem. The protein resides in the cajal body. It is found in the cytoplasm. The protein localises to the cytoplasmic granule. Its subcellular location is the perikaryon. It localises to the cell projection. The protein resides in the neuron projection. It is found in the myofibril. The protein localises to the sarcomere. Its subcellular location is the z line. Its function is as follows. The SMN complex plays an essential role in spliceosomal snRNP assembly in the cytoplasm and is required for pre-mRNA splicing in the nucleus. It may also play a role in the metabolism of snoRNPs. Required in motor neurons and proprioceptive neurons to ensure correct U12 intron splicing and proper levels of tmem41b mRNA. Required for the maturation of motor neuron axonal branches and dendrites. The polypeptide is Survival motor neuron protein 1 (smn1) (Danio rerio (Zebrafish)).